The following is a 110-amino-acid chain: UPF0060 membrane protein Ajs_2087 (110 aa).

4 helical membrane passes run 7-27 (LALF…PWLW), 33-53 (SAWL…LLTL), 63-83 (AAYG…VDGV), and 86-106 (GPWD…IAFA).

The protein belongs to the UPF0060 family.

The protein resides in the cell inner membrane. The protein is UPF0060 membrane protein Ajs_2087 of Acidovorax sp. (strain JS42).